The following is an 853-amino-acid chain: Rod cGMP-specific 3',5'-cyclic phosphodiesterase subunit beta (853 aa).

At Ser2 the chain carries N-acetylserine. GAF domains lie at Asn71–Leu220 and Asp252–Val429. The region spanning Glu481 to Tyr814 is the PDEase domain. His557 functions as the Proton donor in the catalytic mechanism. 4 residues coordinate a divalent metal cation: His561, His597, Asp598, and Asp718. A Cysteine methyl ester modification is found at Cys850. Cys850 carries S-geranylgeranyl cysteine lipidation. A propeptide spans Arg851–Leu853 (removed in mature form).

It belongs to the cyclic nucleotide phosphodiesterase family. In terms of assembly, oligomer composed of two catalytic chains (alpha and beta), an inhibitory chain (gamma) and the delta chain. Requires a divalent metal cation as cofactor.

The protein resides in the membrane. It localises to the cell projection. It is found in the cilium. Its subcellular location is the photoreceptor outer segment. It catalyses the reaction 3',5'-cyclic GMP + H2O = GMP + H(+). Functionally, necessary for the formation of a functional phosphodiesterase holoenzyme. Involved in retinal circadian rhythm photoentrainment via modulation of UVA and orange light-induced phase-shift of the retina clock. May participate in processes of transmission and amplification of the visual signal. Its function is as follows. Rod-specific cGMP phosphodiesterase that catalyzes the hydrolysis of 3',5'-cyclic GMP. Necessary for the formation of a functional phosphodiesterase holoenzyme. Involved in retinal circadian rhythm photoentrainment via modulation of UVA and orange light-induced phase-shift of the retina clock. May participate in processes of transmission and amplification of the visual signal. This chain is Rod cGMP-specific 3',5'-cyclic phosphodiesterase subunit beta (PDE6B), found in Bos taurus (Bovine).